The sequence spans 209 residues: Urease accessory protein UreG (209 aa).

11-18 (GPVGSGKT) is a binding site for GTP.

Belongs to the SIMIBI class G3E GTPase family. UreG subfamily. Homodimer. UreD, UreF and UreG form a complex that acts as a GTP-hydrolysis-dependent molecular chaperone, activating the urease apoprotein by helping to assemble the nickel containing metallocenter of UreC. The UreE protein probably delivers the nickel.

It is found in the cytoplasm. In terms of biological role, facilitates the functional incorporation of the urease nickel metallocenter. This process requires GTP hydrolysis, probably effectuated by UreG. This Edwardsiella ictaluri (strain 93-146) protein is Urease accessory protein UreG.